A 385-amino-acid chain; its full sequence is Galactokinase (385 aa).

Position 34–37 (34–37 (EHTD)) interacts with substrate. Residue 124–130 (SAGLSSS) participates in ATP binding. Positions 130 and 162 each coordinate Mg(2+). Asp-174 acts as the Proton acceptor in catalysis. Tyr-223 contacts substrate.

It belongs to the GHMP kinase family. GalK subfamily.

The protein resides in the cytoplasm. The catalysed reaction is alpha-D-galactose + ATP = alpha-D-galactose 1-phosphate + ADP + H(+). Its pathway is carbohydrate metabolism; galactose metabolism. In terms of biological role, catalyzes the transfer of the gamma-phosphate of ATP to D-galactose to form alpha-D-galactose-1-phosphate (Gal-1-P). In Pasteurella multocida (strain Pm70), this protein is Galactokinase.